Reading from the N-terminus, the 1728-residue chain is Protein NETWORKED 1A (1728 aa).

The NAB domain occupies Y13–L92. Coiled-coil stretches lie at residues L155–E446, M476–I827, F857–N885, Q954–Q1016, E1090–V1323, L1403–R1431, and R1576–K1684. The disordered stretch occupies residues A1419–K1441. Positions R1424–D1439 are enriched in basic residues.

This sequence belongs to the NET family. In terms of assembly, interacts with F-actin. As to expression, expressed in root meristems and at very low levels throughout mature vasculature.

The protein resides in the cytoplasm. It localises to the cytoskeleton. It is found in the cell membrane. Its subcellular location is the cell junction. The protein localises to the plasmodesma. In terms of biological role, plant-specific actin binding protein. Associates with F-actin at the plasma membrane and plasmodesmata. May be part of a membrane-cytoskeletal adapter complex. The protein is Protein NETWORKED 1A of Arabidopsis thaliana (Mouse-ear cress).